The chain runs to 104 residues: Vesicle-associated membrane protein 3 (104 aa).

A disordered region spans residues 1–23 (MTTNAPAGSSAAAGSSRRLQQTQ). Residues 1 to 81 (MTTNAPAGSS…KRKYWWKNCK (81 aa)) are Cytoplasmic-facing. Positions 7 to 16 (AGSSAAAGSS) are enriched in low complexity. One can recognise a v-SNARE coiled-coil homology domain in the interval 18–78 (RLQQTQNQVD…AKLKRKYWWK (61 aa)). Glycyl lysine isopeptide (Lys-Gly) (interchain with G-Cter in ubiquitin) cross-links involve residues Lys70, Lys72, and Lys81. A helical; Anchor for type IV membrane protein transmembrane segment spans residues 82–102 (MWAIGITVVVIIIIIIVVWSI). The Vesicular segment spans residues 103-104 (SS).

Belongs to the synaptobrevin family. In terms of assembly, interacts with POPDC1 (via the C-terminus cytoplasmic tail). Interacts with BCAP31; involved in VAMP3 export from the endoplasmic reticulum. Interacts with BAIAP3; this interaction is increased in the presence of calcium. Interacts with PICALM. In terms of processing, ubiquitinated by RNF167 at Lys-70, Lys-72 and Lys-81, regulating the recycling endosome pathway.

The protein localises to the early endosome membrane. It is found in the recycling endosome membrane. It localises to the synapse. Its subcellular location is the synaptosome. In terms of biological role, SNARE involved in vesicular transport from the late endosomes to the trans-Golgi network. This is Vesicle-associated membrane protein 3 (VAMP3) from Bos taurus (Bovine).